The sequence spans 117 residues: Ig kappa chain V region 12F2 (117 aa).

The first 6 residues, 1-6 (LPGARC), serve as a signal peptide directing secretion. A framework-1 region spans residues 7–29 (AYDMTQTPASVEVAVGGTVTIKC). C29 and C86 are joined by a disulfide. The segment at 30–40 (QASQSISTYLS) is complementarity-determining-1. The framework-2 stretch occupies residues 41–55 (WYQQKPGQRPKLLIY). The complementarity-determining-2 stretch occupies residues 56–62 (RASTLAS). A framework-3 region spans residues 63–94 (GVSSRFKGSGSGTEFTLTISGVECADAATYYC). The interval 95 to 106 (QQGWSSSNVENV) is complementarity-determining-3. Positions 107–116 (FGGGTEVVVK) are framework-4.

The protein is Ig kappa chain V region 12F2 of Oryctolagus cuniculus (Rabbit).